The primary structure comprises 61 residues: Temporin-CDYa (61 aa).

An N-terminal signal peptide occupies residues 1 to 22 (MFPLKKSLLLLFFLGTINFSFC). Positions 23–44 (EEERNAEEERRDDPEERDVAME) are excised as a propeptide. Leu-59 carries the post-translational modification Leucine amide.

The protein belongs to the frog skin active peptide (FSAP) family. Temporin subfamily. Expressed by the skin glands.

Its subcellular location is the secreted. In terms of biological role, antimicrobial peptide. The chain is Temporin-CDYa from Rana dybowskii (Dybovsky's frog).